The following is a 79-amino-acid chain: Defensin-1 (79 aa).

The first 23 residues, 1 to 23 (MKFLNVVAIALLVVACLAVYSNA), serve as a signal peptide directing secretion. 3 disulfides stabilise this stretch: Cys42/Cys69, Cys55/Cys75, and Cys59/Cys77.

It belongs to the invertebrate defensin family. Type 1 subfamily.

The protein resides in the secreted. In Stomoxys calcitrans (Stable fly), this protein is Defensin-1 (SMD1).